Here is a 500-residue protein sequence, read N- to C-terminus: NAD(P)H-quinone oxidoreductase subunit 2, chloroplastic (500 aa).

13 helical membrane-spanning segments follow: residues Ile-15 to Leu-35, Trp-42 to Trp-62, Phe-79 to Ile-99, Leu-109 to Ala-129, Leu-132 to Tyr-152, Leu-167 to Leu-187, Leu-201 to Val-221, Val-247 to Ile-267, Trp-278 to Ile-298, Met-306 to Thr-326, Leu-334 to Phe-354, Ala-377 to Phe-397, and Ile-400 to Leu-420.

It belongs to the complex I subunit 2 family. As to quaternary structure, NDH is composed of at least 16 different subunits, 5 of which are encoded in the nucleus.

The protein resides in the plastid. Its subcellular location is the chloroplast thylakoid membrane. It carries out the reaction a plastoquinone + NADH + (n+1) H(+)(in) = a plastoquinol + NAD(+) + n H(+)(out). The catalysed reaction is a plastoquinone + NADPH + (n+1) H(+)(in) = a plastoquinol + NADP(+) + n H(+)(out). In terms of biological role, NDH shuttles electrons from NAD(P)H:plastoquinone, via FMN and iron-sulfur (Fe-S) centers, to quinones in the photosynthetic chain and possibly in a chloroplast respiratory chain. The immediate electron acceptor for the enzyme in this species is believed to be plastoquinone. Couples the redox reaction to proton translocation, and thus conserves the redox energy in a proton gradient. In Chaetosphaeridium globosum (Charophycean green alga), this protein is NAD(P)H-quinone oxidoreductase subunit 2, chloroplastic.